The sequence spans 146 residues: Urease accessory protein UreE 1 (146 aa).

It belongs to the UreE family.

The protein localises to the cytoplasm. Its function is as follows. Involved in urease metallocenter assembly. Binds nickel. Probably functions as a nickel donor during metallocenter assembly. This Pseudomonas syringae pv. tomato (strain ATCC BAA-871 / DC3000) protein is Urease accessory protein UreE 1.